The sequence spans 187 residues: Elongation factor P (187 aa).

This sequence belongs to the elongation factor P family.

It localises to the cytoplasm. It participates in protein biosynthesis; polypeptide chain elongation. In terms of biological role, involved in peptide bond synthesis. Stimulates efficient translation and peptide-bond synthesis on native or reconstituted 70S ribosomes in vitro. Probably functions indirectly by altering the affinity of the ribosome for aminoacyl-tRNA, thus increasing their reactivity as acceptors for peptidyl transferase. In Jannaschia sp. (strain CCS1), this protein is Elongation factor P.